We begin with the raw amino-acid sequence, 248 residues long: 4-hydroxy-tetrahydrodipicolinate reductase (248 aa).

NAD(+) is bound by residues 9–14 (GAKGRV), 77–79 (GTT), and 104–107 (APNF). Catalysis depends on histidine 134, which acts as the Proton donor/acceptor. Position 135 (histidine 135) interacts with (S)-2,3,4,5-tetrahydrodipicolinate. Catalysis depends on lysine 138, which acts as the Proton donor. 144–145 (GT) is a (S)-2,3,4,5-tetrahydrodipicolinate binding site.

This sequence belongs to the DapB family.

The protein resides in the cytoplasm. The catalysed reaction is (S)-2,3,4,5-tetrahydrodipicolinate + NAD(+) + H2O = (2S,4S)-4-hydroxy-2,3,4,5-tetrahydrodipicolinate + NADH + H(+). It catalyses the reaction (S)-2,3,4,5-tetrahydrodipicolinate + NADP(+) + H2O = (2S,4S)-4-hydroxy-2,3,4,5-tetrahydrodipicolinate + NADPH + H(+). It functions in the pathway amino-acid biosynthesis; L-lysine biosynthesis via DAP pathway; (S)-tetrahydrodipicolinate from L-aspartate: step 4/4. In terms of biological role, catalyzes the conversion of 4-hydroxy-tetrahydrodipicolinate (HTPA) to tetrahydrodipicolinate. The polypeptide is 4-hydroxy-tetrahydrodipicolinate reductase (Corynebacterium aurimucosum (strain ATCC 700975 / DSM 44827 / CIP 107346 / CN-1) (Corynebacterium nigricans)).